We begin with the raw amino-acid sequence, 283 residues long: Bifunctional protein FolD (283 aa).

NADP(+) contacts are provided by residues 163 to 165, Ser-188, and Ile-229; that span reads GRS.

The protein belongs to the tetrahydrofolate dehydrogenase/cyclohydrolase family. As to quaternary structure, homodimer.

It catalyses the reaction (6R)-5,10-methylene-5,6,7,8-tetrahydrofolate + NADP(+) = (6R)-5,10-methenyltetrahydrofolate + NADPH. The enzyme catalyses (6R)-5,10-methenyltetrahydrofolate + H2O = (6R)-10-formyltetrahydrofolate + H(+). It participates in one-carbon metabolism; tetrahydrofolate interconversion. Functionally, catalyzes the oxidation of 5,10-methylenetetrahydrofolate to 5,10-methenyltetrahydrofolate and then the hydrolysis of 5,10-methenyltetrahydrofolate to 10-formyltetrahydrofolate. This is Bifunctional protein FolD from Latilactobacillus sakei subsp. sakei (strain 23K) (Lactobacillus sakei subsp. sakei).